We begin with the raw amino-acid sequence, 458 residues long: Exodeoxyribonuclease 7 large subunit (458 aa).

It belongs to the XseA family. In terms of assembly, heterooligomer composed of large and small subunits.

It localises to the cytoplasm. The catalysed reaction is Exonucleolytic cleavage in either 5'- to 3'- or 3'- to 5'-direction to yield nucleoside 5'-phosphates.. Bidirectionally degrades single-stranded DNA into large acid-insoluble oligonucleotides, which are then degraded further into small acid-soluble oligonucleotides. The protein is Exodeoxyribonuclease 7 large subunit of Stutzerimonas stutzeri (strain A1501) (Pseudomonas stutzeri).